Consider the following 92-residue polypeptide: Integration host factor subunit beta (92 aa).

Belongs to the bacterial histone-like protein family. In terms of assembly, heterodimer of an alpha and a beta chain.

Its function is as follows. This protein is one of the two subunits of integration host factor, a specific DNA-binding protein that functions in genetic recombination as well as in transcriptional and translational control. This is Integration host factor subunit beta from Vibrio cholerae serotype O1 (strain ATCC 39541 / Classical Ogawa 395 / O395).